We begin with the raw amino-acid sequence, 880 residues long: Leucine--tRNA ligase (880 aa).

The 'HIGH' region motif lies at 46–56 (PYPSGALHMGH). Positions 638 to 642 (KMSKS) match the 'KMSKS' region motif. K641 is a binding site for ATP.

It belongs to the class-I aminoacyl-tRNA synthetase family.

It is found in the cytoplasm. The catalysed reaction is tRNA(Leu) + L-leucine + ATP = L-leucyl-tRNA(Leu) + AMP + diphosphate. The polypeptide is Leucine--tRNA ligase (Stenotrophomonas maltophilia (strain K279a)).